The primary structure comprises 597 residues: Elongation factor 4 (597 aa).

A tr-type G domain is found at 2–184; it reads DHIRNFSIIA…ALIAKVPPPK (183 aa). GTP is bound by residues 14–19 and 131–134; these read DHGKST and NKID.

The protein belongs to the TRAFAC class translation factor GTPase superfamily. Classic translation factor GTPase family. LepA subfamily.

It is found in the cell inner membrane. It catalyses the reaction GTP + H2O = GDP + phosphate + H(+). Its function is as follows. Required for accurate and efficient protein synthesis under certain stress conditions. May act as a fidelity factor of the translation reaction, by catalyzing a one-codon backward translocation of tRNAs on improperly translocated ribosomes. Back-translocation proceeds from a post-translocation (POST) complex to a pre-translocation (PRE) complex, thus giving elongation factor G a second chance to translocate the tRNAs correctly. Binds to ribosomes in a GTP-dependent manner. The chain is Elongation factor 4 from Cupriavidus taiwanensis (strain DSM 17343 / BCRC 17206 / CCUG 44338 / CIP 107171 / LMG 19424 / R1) (Ralstonia taiwanensis (strain LMG 19424)).